The sequence spans 185 residues: Large ribosomal subunit protein uL5 (185 aa).

It belongs to the universal ribosomal protein uL5 family. In terms of assembly, part of the 50S ribosomal subunit; part of the 5S rRNA/L5/L18/L25 subcomplex. Contacts the 5S rRNA and the P site tRNA. Forms a bridge to the 30S subunit in the 70S ribosome.

This is one of the proteins that bind and probably mediate the attachment of the 5S RNA into the large ribosomal subunit, where it forms part of the central protuberance. In the 70S ribosome it contacts protein S13 of the 30S subunit (bridge B1b), connecting the 2 subunits; this bridge is implicated in subunit movement. Contacts the P site tRNA; the 5S rRNA and some of its associated proteins might help stabilize positioning of ribosome-bound tRNAs. This is Large ribosomal subunit protein uL5 from Rhizobium rhizogenes (strain K84 / ATCC BAA-868) (Agrobacterium radiobacter).